The following is a 963-amino-acid chain: Reversion-inducing cysteine-rich protein with Kazal motifs (963 aa).

A signal peptide spans 1–28 (MAAAVAAWPWALFCLAAVPPLLSPGAAG). The Knot 1 repeat unit spans residues 31-78 (CCYHAKDNLMCRDVCEQILSSKSDSRLKHLLQRAPEYCPESMGEVWGC). The 5 X Knot repeats stretch occupies residues 31-332 (CCYHAKDNLM…NAVEVSMLTC (302 aa)). An N-linked (GlcNAc...) asparagine glycan is attached at asparagine 80. Knot repeat units follow at residues 98 to 135 (CCEL…LFSC) and 145 to 191 (CCSY…LIHC). Asparagine 194 carries N-linked (GlcNAc...) asparagine glycosylation. Knot repeat units follow at residues 210–257 (CCDR…LWQC) and 286–332 (CCSK…MLTC). 2 N-linked (GlcNAc...) asparagine glycosylation sites follow: asparagine 291 and asparagine 346. Kazal-like domains follow at residues 621–667 (KFTG…SCIS), 692–746 (SFGK…PCQP), and 749–783 (KSVE…HCQA). Disulfide bonds link cysteine 627/cysteine 652, cysteine 629/cysteine 648, cysteine 637/cysteine 665, cysteine 710/cysteine 729, cysteine 718/cysteine 744, and cysteine 755/cysteine 781. Residue serine 936 is the site of GPI-anchor amidated serine attachment. Residues 937–963 (PSVKVGPVLHCLFISFSFTLLKLMDYI) constitute a propeptide that is removed on maturation.

It belongs to the RECK family. As to quaternary structure, interacts (via knot repeats) with WNT7A (via disordered linker region); the interaction is direct. Interacts (via knot repeats) with WNT7B (via disordered linker region); the interaction is direct. Interacts with ADGRA2; the interaction is direct. Localizes to the plasma membrane via its GPI-anchor. Released from the plasma membrane following cleavage of the GPI-anchor by GDPD5/GPE2.

It localises to the cell membrane. Functions together with ADGRA2 to enable brain endothelial cells to selectively respond to Wnt7 signals (WNT7A or WNT7B). Plays a key role in Wnt7-specific responses: required for central nervous system (CNS) angiogenesis and blood-brain barrier regulation. Acts as a Wnt7-specific coactivator of canonical Wnt signaling by decoding Wnt ligands: acts by interacting specifically with the disordered linker region of Wnt7, thereby conferring ligand selectivity for Wnt7. ADGRA2 is then required to deliver RECK-bound Wnt7 to frizzled by assembling a higher-order RECK-ADGRA2-Fzd-LRP5-LRP6 complex. Also acts as a serine protease inhibitor. The chain is Reversion-inducing cysteine-rich protein with Kazal motifs from Gallus gallus (Chicken).